A 25-amino-acid polypeptide reads, in one-letter code: Ocellatin-K1 (25 aa).

Isoleucine 25 is subject to Isoleucine amide.

In terms of tissue distribution, expressed by the skin glands.

Its subcellular location is the secreted. Its function is as follows. Has hemolytic and antibacterial activity. This Leptodactylus knudseni (Knudsen's thin-toed frog) protein is Ocellatin-K1.